The following is a 232-amino-acid chain: UPF0758 protein FN0909 (232 aa).

An MPN domain is found at 110 to 232; that stretch reads KISNKDILLK…YFSFLEEGLI (123 aa). 3 residues coordinate Zn(2+): histidine 181, histidine 183, and aspartate 194. The short motif at 181-194 is the JAMM motif element; the sequence is HNHPSDNITPSKSD.

It belongs to the UPF0758 family.

This chain is UPF0758 protein FN0909, found in Fusobacterium nucleatum subsp. nucleatum (strain ATCC 25586 / DSM 15643 / BCRC 10681 / CIP 101130 / JCM 8532 / KCTC 2640 / LMG 13131 / VPI 4355).